The sequence spans 132 residues: ATP synthase epsilon chain (132 aa).

This sequence belongs to the ATPase epsilon chain family. As to quaternary structure, F-type ATPases have 2 components, CF(1) - the catalytic core - and CF(0) - the membrane proton channel. CF(1) has five subunits: alpha(3), beta(3), gamma(1), delta(1), epsilon(1). CF(0) has three main subunits: a, b and c.

Its subcellular location is the cell membrane. Produces ATP from ADP in the presence of a proton gradient across the membrane. The protein is ATP synthase epsilon chain of Desulfitobacterium hafniense (strain DSM 10664 / DCB-2).